Reading from the N-terminus, the 208-residue chain is Putative 3-methyladenine DNA glycosylase (208 aa).

Belongs to the DNA glycosylase MPG family.

This chain is Putative 3-methyladenine DNA glycosylase, found in Lactobacillus delbrueckii subsp. bulgaricus (strain ATCC 11842 / DSM 20081 / BCRC 10696 / JCM 1002 / NBRC 13953 / NCIMB 11778 / NCTC 12712 / WDCM 00102 / Lb 14).